The primary structure comprises 431 residues: Mitochondrial distribution and morphology protein 12 (431 aa).

The 431-residue stretch at 1–431 (MSIDLNWETL…VYPSFWTFLV (431 aa)) folds into the SMP-LTD domain. 2 disordered regions span residues 68-153 (DFYE…GVST) and 209-289 (QSHT…PKPE). Over residues 69–96 (FYEDLDDDDGGSDEDDEGSNSCQTDEEN) the composition is skewed to acidic residues. Over residues 97–113 (EAAKTLRERRKMDRVER) the composition is skewed to basic and acidic residues. The segment covering 115-129 (ANGSSNVSNPPSYTD) has biased composition (polar residues). The span at 241–252 (SASTLAVSSSTT) shows a compositional bias: low complexity.

The protein belongs to the MDM12 family. As to quaternary structure, component of the ER-mitochondria encounter structure (ERMES) or MDM complex, composed of mmm1, mdm10, mdm12 and mdm34. A mmm1 homodimer associates with one molecule of mdm12 on each side in a pairwise head-to-tail manner, and the SMP-LTD domains of mmm1 and mdm12 generate a continuous hydrophobic tunnel for phospholipid trafficking.

Its subcellular location is the mitochondrion outer membrane. It is found in the endoplasmic reticulum membrane. Its function is as follows. Component of the ERMES/MDM complex, which serves as a molecular tether to connect the endoplasmic reticulum (ER) and mitochondria. Components of this complex are involved in the control of mitochondrial shape and protein biogenesis, and function in nonvesicular lipid trafficking between the ER and mitochondria. Mdm12 is required for the interaction of the ER-resident membrane protein mmm1 and the outer mitochondrial membrane-resident beta-barrel protein mdm10. The mdm12-mmm1 subcomplex functions in the major beta-barrel assembly pathway that is responsible for biogenesis of all mitochondrial outer membrane beta-barrel proteins, and acts in a late step after the SAM complex. The mdm10-mdm12-mmm1 subcomplex further acts in the TOM40-specific pathway after the action of the mdm12-mmm1 complex. Essential for establishing and maintaining the structure of mitochondria and maintenance of mtDNA nucleoids. The polypeptide is Mitochondrial distribution and morphology protein 12 (Sclerotinia sclerotiorum (strain ATCC 18683 / 1980 / Ss-1) (White mold)).